Here is a 224-residue protein sequence, read N- to C-terminus: Uracil-DNA glycosylase (224 aa).

The active-site Proton acceptor is aspartate 61.

The protein belongs to the uracil-DNA glycosylase (UDG) superfamily. UNG family.

Its subcellular location is the cytoplasm. It carries out the reaction Hydrolyzes single-stranded DNA or mismatched double-stranded DNA and polynucleotides, releasing free uracil.. Functionally, excises uracil residues from the DNA which can arise as a result of misincorporation of dUMP residues by DNA polymerase or due to deamination of cytosine. In Mannheimia succiniciproducens (strain KCTC 0769BP / MBEL55E), this protein is Uracil-DNA glycosylase.